A 122-amino-acid chain; its full sequence is Acidic phospholipase A2 A' (122 aa).

7 disulfide bridges follow: Cys26–Cys115, Cys28–Cys44, Cys43–Cys95, Cys49–Cys122, Cys50–Cys88, Cys57–Cys81, and Cys75–Cys86. 3 residues coordinate Ca(2+): Tyr27, Gly29, and Gly31. His47 is a catalytic residue. Position 48 (Asp48) interacts with Ca(2+). Asp89 is a catalytic residue.

It belongs to the phospholipase A2 family. Group II subfamily. D49 sub-subfamily. Ca(2+) is required as a cofactor. As to expression, expressed by the venom gland.

It localises to the secreted. The catalysed reaction is a 1,2-diacyl-sn-glycero-3-phosphocholine + H2O = a 1-acyl-sn-glycero-3-phosphocholine + a fatty acid + H(+). Its function is as follows. PLA2 catalyzes the calcium-dependent hydrolysis of the 2-acyl groups in 3-sn-phosphoglycerides. The chain is Acidic phospholipase A2 A' from Gloydius halys (Chinese water mocassin).